The chain runs to 717 residues: MFIWTKAPARGLGKASKILPKRDDTQKVFETTHHKQFHTATTSVRRSSSSAKERQRAERQQLTRLLKESPGKRDARNFLKQFDVPKKSKASITAKAKELVSENIHNDLASLRTGVNLGDLYKPTVFTREPLPEESYDAEKDEPVHLALVKLRQPQKLTDRTLGDIALTLSQMARLGLSTAVVLDCDEDTSTHSIEVKPEYGNMVREQALRLVAALEDYNEPGSLLVEDVLGYSPLDNDMPSTNQVRGGVEVQHTYLLFPPIDDGVIPVIAPFAYDENLKKVRVQADDVLLALVREFAGLGHSNGMESPRGSLHKTKRVVERPLLDRIIILDPLGGIPSENRADGAHVFVNLEAEYRDIKKELQQLSSKTSNGAGSPTSLSTGNPLSKFVEQEVVSLPGVQSENLASSAPVRHLKNLDVLERGLKLLPPSSSGLILTPMEAATKAIPDDARTTPSKNPLLHNLLTDKPMTSSSLPTSPTSRFLGSAAPNPATFLKKGIPLTMIPDPRVHGPWQPPSASNPSIELADDPRINFPKLVDLIDDSFQRKLHPKNYLDRIHGRVAGIIIAGDYEGGAICTWETPKSLQGATPPSVLTPDSPYWIPYLDKFAVLTSSQGSGGVSDIVWAALTRTCFPDGVVWRSRTSNPVNKWYQERSMGMWKLPGDQWTMFWTTEGIVGGWEQGKWGDVDDAKKRDMKRWDACIDVCSGIEPSWADGIQRDD.

The N-terminal 23 residues, 1–23 (MFIWTKAPARGLGKASKILPKRD), are a transit peptide targeting the mitochondrion. The disordered stretch occupies residues 35 to 70 (KQFHTATTSVRRSSSSAKERQRAERQQLTRLLKESP). Residues 39–50 (TATTSVRRSSSS) show a composition bias toward low complexity. Residues 51 to 70 (AKERQRAERQQLTRLLKESP) are compositionally biased toward basic and acidic residues. The 174-residue stretch at 518 to 691 (NPSIELADDP…GDVDDAKKRD (174 aa)) folds into the N-acetyltransferase domain.

Belongs to the acetyltransferase family.

Its subcellular location is the mitochondrion. The catalysed reaction is L-glutamate + acetyl-CoA = N-acetyl-L-glutamate + CoA + H(+). The protein operates within amino-acid biosynthesis; L-arginine biosynthesis; N(2)-acetyl-L-ornithine from L-glutamate: step 1/4. In terms of biological role, N-acetylglutamate synthase involved in arginine biosynthesis. The polypeptide is Amino-acid acetyltransferase, mitochondrial (arg2) (Pyrenophora tritici-repentis (strain Pt-1C-BFP) (Wheat tan spot fungus)).